The chain runs to 398 residues: Phosphoglycerate kinase (398 aa).

Residues 21 to 23, arginine 36, 59 to 62, arginine 119, and arginine 157 each bind substrate; these read DFN and HLGR. ATP contacts are provided by residues lysine 208, glycine 296, glutamate 327, and 354 to 357; that span reads GGDS.

Belongs to the phosphoglycerate kinase family. As to quaternary structure, monomer.

The protein resides in the cytoplasm. It carries out the reaction (2R)-3-phosphoglycerate + ATP = (2R)-3-phospho-glyceroyl phosphate + ADP. It functions in the pathway carbohydrate degradation; glycolysis; pyruvate from D-glyceraldehyde 3-phosphate: step 2/5. This Streptococcus pneumoniae (strain 70585) protein is Phosphoglycerate kinase.